The primary structure comprises 333 residues: Nucleoid-associated protein YE1421 (333 aa).

This sequence belongs to the YejK family.

The protein resides in the cytoplasm. It is found in the nucleoid. The polypeptide is Nucleoid-associated protein YE1421 (Yersinia enterocolitica serotype O:8 / biotype 1B (strain NCTC 13174 / 8081)).